We begin with the raw amino-acid sequence, 173 residues long: MNTSQIVLMFCLVVGVAQTALALKEDDCEVCVKTVRRFADTLDDATKKDYKLIEADFKKFCKTQKNKEQRFCYYLGGLEESATGILNELSKPLSWSMPAEKVCEKLKKMDAQICDLRYDKQIDLNNVDLKKLKVRDLKKILNDWDENCEGCLEKSDFIKRIEELKPKYTRSEL.

Residues 1-22 form the signal peptide; that stretch reads MNTSQIVLMFCLVVGVAQTALA. 4 cysteine pairs are disulfide-bonded: C28–C114, C31–C103, C61–C72, and C148–C151.

It belongs to the ARMET family.

It is found in the secreted. Its function is as follows. Required during the maturation of the embryonic nervous system for maintenance of neuronal and cuticular connectivity. Essential for maintenance of dopaminergic neurons and dopamine levels. The sequence is that of Mesencephalic astrocyte-derived neurotrophic factor homolog from Drosophila grimshawi (Hawaiian fruit fly).